A 249-amino-acid polypeptide reads, in one-letter code: Undecaprenyl-diphosphatase (249 aa).

Transmembrane regions (helical) follow at residues 11-31, 35-55, 80-100, 101-121, 135-155, 175-195, 202-222, and 226-246; these read GLTEFLPISSSGHLAIFTAIF, PDVGYFAFLHLATFLAVLIFV, LVLSTIPAVIVGLCFGDFIES, VFSSTFLIGVFLSITGILMLL, IPYLDAMIVGIFQAFSVLPGI, AVKYSFLMGLPVTFGAGILEL, AEQLFGFVISFLTGLLGLYLV, and VIGGKLKIFGYYCFLASFFVL.

The protein belongs to the UppP family.

It is found in the cell membrane. The enzyme catalyses di-trans,octa-cis-undecaprenyl diphosphate + H2O = di-trans,octa-cis-undecaprenyl phosphate + phosphate + H(+). In terms of biological role, catalyzes the dephosphorylation of undecaprenyl diphosphate (UPP). This is Undecaprenyl-diphosphatase from Methanococcus maripaludis (strain C5 / ATCC BAA-1333).